We begin with the raw amino-acid sequence, 400 residues long: Betaine--homocysteine S-methyltransferase 1 (400 aa).

One can recognise a Hcy-binding domain in the interval 8–309 (RGVLERLNAG…YHIRAVAEEL (302 aa)). Residues Cys212, Cys294, and Cys295 each coordinate Zn(2+).

As to quaternary structure, homotetramer. Zn(2+) is required as a cofactor.

The protein resides in the cytoplasm. The catalysed reaction is L-homocysteine + glycine betaine = N,N-dimethylglycine + L-methionine. It participates in amine and polyamine degradation; betaine degradation; sarcosine from betaine: step 1/2. Its pathway is amino-acid biosynthesis; L-methionine biosynthesis via de novo pathway; L-methionine from L-homocysteine (BhmT route): step 1/1. In terms of biological role, involved in the regulation of homocysteine metabolism. Converts betaine and homocysteine to dimethylglycine and methionine, respectively. This reaction is also required for the irreversible oxidation of choline. The chain is Betaine--homocysteine S-methyltransferase 1 (bhmt) from Danio rerio (Zebrafish).